A 503-amino-acid polypeptide reads, in one-letter code: Transcription termination/antitermination protein NusA (503 aa).

Residues 139-203 (GEIINGIVKR…KGPQIFLSRV (65 aa)) form the S1 motif domain. Positions 308-378 (RHKVEVVVSQ…LDVEEVIGQL (71 aa)) constitute a KH domain.

This sequence belongs to the NusA family. As to quaternary structure, monomer. Binds directly to the core enzyme of the DNA-dependent RNA polymerase and to nascent RNA.

Its subcellular location is the cytoplasm. Participates in both transcription termination and antitermination. The protein is Transcription termination/antitermination protein NusA of Rickettsia conorii (strain ATCC VR-613 / Malish 7).